The chain runs to 330 residues: GTPase Obg (330 aa).

One can recognise an Obg domain in the interval Met1–Leu159. One can recognise an OBG-type G domain in the interval Ala160–Gly328. ATP contacts are provided by residues Gly166–Ser173, Phe191–Val195, Asp213–Gly216, Asn280–Glu283, and Ser309–Ala311. Mg(2+) contacts are provided by Ser173 and Thr193.

It belongs to the TRAFAC class OBG-HflX-like GTPase superfamily. OBG GTPase family. As to quaternary structure, monomer. Mg(2+) is required as a cofactor.

It localises to the cytoplasm. In terms of biological role, an essential GTPase which binds GTP, GDP and possibly (p)ppGpp with moderate affinity, with high nucleotide exchange rates and a fairly low GTP hydrolysis rate. Plays a role in control of the cell cycle, stress response, ribosome biogenesis and in those bacteria that undergo differentiation, in morphogenesis control. The chain is GTPase Obg from Parasynechococcus marenigrum (strain WH8102).